A 320-amino-acid polypeptide reads, in one-letter code: ATP-dependent 6-phosphofructokinase isozyme 1 (320 aa).

Residue glycine 12 coordinates ATP. ADP-binding positions include 22–26 (RGVVR) and 55–60 (RYSVSD). Residues 73–74 (RF) and 103–106 (GDGS) contribute to the ATP site. Aspartate 104 contacts Mg(2+). 126–128 (TID) serves as a coordination point for substrate. The Proton acceptor role is filled by aspartate 128. Residue arginine 155 coordinates ADP. Substrate is bound by residues arginine 163 and 170–172 (MGR). ADP-binding positions include 186–188 (GCE), lysine 212, and 214–216 (KKH). Residues glutamate 223, arginine 244, and 250 to 253 (HIQR) each bind substrate.

It belongs to the phosphofructokinase type A (PFKA) family. ATP-dependent PFK group I subfamily. Prokaryotic clade 'B1' sub-subfamily. As to quaternary structure, homotetramer. Mg(2+) is required as a cofactor.

Its subcellular location is the cytoplasm. It carries out the reaction beta-D-fructose 6-phosphate + ATP = beta-D-fructose 1,6-bisphosphate + ADP + H(+). Its pathway is carbohydrate degradation; glycolysis; D-glyceraldehyde 3-phosphate and glycerone phosphate from D-glucose: step 3/4. With respect to regulation, allosterically activated by ADP and other diphosphonucleosides, and allosterically inhibited by phosphoenolpyruvate. Catalyzes the phosphorylation of D-fructose 6-phosphate to fructose 1,6-bisphosphate by ATP, the first committing step of glycolysis. The protein is ATP-dependent 6-phosphofructokinase isozyme 1 of Escherichia coli O6:H1 (strain CFT073 / ATCC 700928 / UPEC).